Reading from the N-terminus, the 297-residue chain is Homoserine kinase (297 aa).

Pro-82 to Ala-92 serves as a coordination point for ATP.

Belongs to the GHMP kinase family. Homoserine kinase subfamily.

It is found in the cytoplasm. The catalysed reaction is L-homoserine + ATP = O-phospho-L-homoserine + ADP + H(+). It participates in amino-acid biosynthesis; L-threonine biosynthesis; L-threonine from L-aspartate: step 4/5. Functionally, catalyzes the ATP-dependent phosphorylation of L-homoserine to L-homoserine phosphate. The sequence is that of Homoserine kinase from Clostridium botulinum (strain Kyoto / Type A2).